Reading from the N-terminus, the 61-residue chain is uncharacterized protein (61 aa).

Residues 24 to 60 (WMRYESERDEKLRMLERMRDELEAELEEIKREIERLR) adopt a coiled-coil conformation.

This is an uncharacterized protein from Archaeoglobus fulgidus (strain ATCC 49558 / DSM 4304 / JCM 9628 / NBRC 100126 / VC-16).